The primary structure comprises 724 residues: MEHNKAGSSGQCPVMHGGLTSASMSNMDWWPKALNLDILHQHDSKTNPLGADFNYREELKKLDVEALKRDLKALMTNSQEWWPADWGHYGGLMIRMAWHSAGTYRIADGRGGGGTGNQRFAPLNSWPDNANLDKARRLLWPIKQKYGNKISWADLMILAGNMAYESMGLKTFGFAFGREDIWHPEKDIYWGSEKEWLAKSGGENSRYSGQRDLENPLAAVMMGLIYVNPEGVDGNPDPLKTAQDMRVTFARMAMNDEETVALTAGGHTVGKAHGNGKASNLGPDPEGAELHEQGLGWNNHTSRGIGRNTVTSGIEGAWTTHPTRWDNEYFYLLLSYEWQLTKSPAGAWQWEPVNIKEEDKPVDVEDPSIRYNPMMTDADMALKIDPEYRKISERFYKDPAYFSEVFARAWFKLTHRDMGPKARYFGPDVPAEDLIWQDPVPAGRKDYDVNAVKAKIAASGLSISEMVSTAWDSARTFRGSDKRGGANGARIRLAPQKDWEGNEPARLGKVLAVLEKIAAESGISIADTIVLAGNVGIEQAAKAAGVNVTVPFAPGRGDATIEQTDVESFEVLEPLADGFRNWQKKHYVVTPEEMLLDKAQLLRLTAPEMTVLIGGMRVLGTNYGGSQHGVFTDRVGALTNDFFVNLTDMSYTWKPTGRNSYEIVERKSGKVKWTATRVDLVFGSNSILRAYAEVYAQDDNKEKFVKDFVAAWTKVMNADRFDLV.

A cross-link (tryptophyl-tyrosyl-methioninium (Trp-Tyr) (with M-252)) is located at residues 98–226 (WHSAGTYRIA…LAAVMMGLIY (129 aa)). Histidine 99 (proton acceptor) is an active-site residue. The tryptophyl-tyrosyl-methioninium (Tyr-Met) (with W-98) cross-link spans 226–252 (YVNPEGVDGNPDPLKTAQDMRVTFARM). Residue histidine 267 coordinates heme b.

It belongs to the peroxidase family. Peroxidase/catalase subfamily. In terms of assembly, homodimer or homotetramer. Requires heme b as cofactor. In terms of processing, formation of the three residue Trp-Tyr-Met cross-link is important for the catalase, but not the peroxidase activity of the enzyme.

The enzyme catalyses H2O2 + AH2 = A + 2 H2O. It catalyses the reaction 2 H2O2 = O2 + 2 H2O. Functionally, bifunctional enzyme with both catalase and broad-spectrum peroxidase activity. The chain is Catalase-peroxidase from Vibrio cholerae serotype O1 (strain ATCC 39315 / El Tor Inaba N16961).